Reading from the N-terminus, the 720-residue chain is ATP-dependent RNA helicase glh-3 (720 aa).

Residues 1-11 show a composition bias toward polar residues; sequence MDKSPTKTSIR. Disordered stretches follow at residues 1 to 34 and 125 to 180; these read MDKS…SCIK and LNSR…SYGN. Composition is skewed to basic and acidic residues over residues 141-154 and 162-172; these read NVKE…RSDD and SAKDEERDRDS. 2 consecutive CCHC-type zinc fingers follow at residues 202 to 219 and 222 to 239; these read NTCF…ECSA and RECA…ECAS. The Q motif signature appears at 298–326; that stretch reads KSFSDSDIPQSMRRNVERAGYTRTTPIQQ. Positions 329-513 constitute a Helicase ATP-binding domain; it reads LPLVADGKDI…RKLLREDYTM (185 aa). 342–349 lines the ATP pocket; it reads AQTGSGKT. The DEAD box motif lies at 456-459; that stretch reads DEAD. A Helicase C-terminal domain is found at 549-698; the sequence is DIDTYTTEKN…VVPSWMKEAA (150 aa). The segment at 696-720 is disordered; sequence EAAGGTSNPNKFEKSIDTEEPEEAW.

It belongs to the DEAD box helicase family. DDX4/VASA subfamily. Interacts with csn-5. Interacts (via C-terminus) with kgb-1. Interacts with zyx-1.

The protein localises to the cytoplasm. The catalysed reaction is ATP + H2O = ADP + phosphate + H(+). Probable ATP-binding RNA helicase. This chain is ATP-dependent RNA helicase glh-3, found in Caenorhabditis elegans.